Reading from the N-terminus, the 205-residue chain is Large ribosomal subunit protein uL3 (205 aa).

The protein belongs to the universal ribosomal protein uL3 family. In terms of assembly, part of the 50S ribosomal subunit. Forms a cluster with proteins L14 and L19.

In terms of biological role, one of the primary rRNA binding proteins, it binds directly near the 3'-end of the 23S rRNA, where it nucleates assembly of the 50S subunit. This chain is Large ribosomal subunit protein uL3, found in Flavobacterium johnsoniae (strain ATCC 17061 / DSM 2064 / JCM 8514 / BCRC 14874 / CCUG 350202 / NBRC 14942 / NCIMB 11054 / UW101) (Cytophaga johnsonae).